Consider the following 435-residue polypeptide: Beta-arrestin arr-1 (435 aa).

The tract at residues 358–382 (LTHSKPPESPERTDRGLPSIEATNG) is disordered. Residues 362–372 (KPPESPERTDR) are compositionally biased toward basic and acidic residues. Positions 390-394 (LIQLH) match the Clathrin box motif. The short motif at 404–414 (DLIFEDFARMR) is the [DE]-X(1,2)-F-X-X-[FL]-X-X-X-R motif element. A disordered region spans residues 416–435 (HGNDSEDQPSPSANLPPSLL). Low complexity predominate over residues 424 to 435 (PSPSANLPPSLL).

This sequence belongs to the arrestin family. Component of a complex composed of arr-1, daf-18 and mpz-1. Within the complex, interacts (via C-terminus) with mpz-1 (via PDZ domain) and phosphatase daf-18. May interact (via C-terminus) with clathrin chc-1 and beta-2 adaptin (AP2) apb-1. Expressed in head neurons, nerve ring and ventral nerve cord (at protein level). Expressed in the nervous system including the nerve ring and the ventral and dorsal nerve cords. Highly expressed in amphid chemosensory neurons AWA, AWB, AWC, ADL and ASH, and in hermaphrodite specific neuron HSN. Also expressed in the intestine.

The protein resides in the perikaryon. Its subcellular location is the cell projection. It is found in the dendrite. Its function is as follows. Adapter protein required for olfactory adaptation and recovery to volatile odorants, probably by desensitization of G-protein coupled receptors (GPCR). May play a role in clathrin-mediated GPCR endocytosis. Acts as a positive regulator of insulin-like daf-2 signaling pathway probably by forming a complex with mpz-1 and phosphatase daf-18 likely resulting in daf-18 inhibition. Involved in egg-laying. This is Beta-arrestin arr-1 from Caenorhabditis elegans.